The following is a 520-amino-acid chain: Peptide chain release factor 3 (520 aa).

A tr-type G domain is found at 8–273; the sequence is ESRKTFAIIS…AYVDHAPMPN (266 aa). GTP-binding positions include 17–24, 85–89, and 139–142; these read SHPDAGKT, DTPGH, and NKLD.

It belongs to the TRAFAC class translation factor GTPase superfamily. Classic translation factor GTPase family. PrfC subfamily.

It is found in the cytoplasm. In terms of biological role, increases the formation of ribosomal termination complexes and stimulates activities of RF-1 and RF-2. It binds guanine nucleotides and has strong preference for UGA stop codons. It may interact directly with the ribosome. The stimulation of RF-1 and RF-2 is significantly reduced by GTP and GDP, but not by GMP. The protein is Peptide chain release factor 3 of Staphylococcus carnosus (strain TM300).